The chain runs to 369 residues: Mitogen-activated protein kinase 11 (369 aa).

The Protein kinase domain occupies 40–326 (VPPLRPIGRG…VDEALCHPYL (287 aa)). ATP contacts are provided by residues 46–54 (IGRGASGIV) and lysine 69. Residue aspartate 166 is the Proton acceptor of the active site. The residue at position 198 (threonine 198) is a Phosphothreonine. The short motif at 198-200 (TEY) is the TXY element. Tyrosine 200 bears the Phosphotyrosine mark. A Phosphothreonine modification is found at threonine 203.

The protein belongs to the protein kinase superfamily. CMGC Ser/Thr protein kinase family. MAP kinase subfamily. In terms of assembly, interacts with MKK1, MKK2 and MKK6. Post-translationally, dually phosphorylated on Thr-198 and Tyr-200, which activates the enzyme.

The catalysed reaction is L-seryl-[protein] + ATP = O-phospho-L-seryl-[protein] + ADP + H(+). It carries out the reaction L-threonyl-[protein] + ATP = O-phospho-L-threonyl-[protein] + ADP + H(+). Activated by threonine and tyrosine phosphorylation. In Arabidopsis thaliana (Mouse-ear cress), this protein is Mitogen-activated protein kinase 11 (MPK11).